Here is a 182-residue protein sequence, read N- to C-terminus: MTFEQLIPLIIMAFALGMDAFSVSLGMGMMPLKLRQILYIGMTIGIFHIIMPFIGMVLGRFLSEKYGDIAHFAGAILLIGLGFYIVYSTILQNEETRTAPIGISLFVFAFGVSIDSFSVGLSLGIYGAQTIITILLFGFVSMLLAWIGLLIGRHAKDMLGTYGEIVGGIILVGFGLYILFPI.

Helical transmembrane passes span 6–26, 37–57, 71–91, 101–121, 131–151, and 162–182; these read LIPLIIMAFALGMDAFSVSLG, ILYIGMTIGIFHIIMPFIGMV, HFAGAILLIGLGFYIVYSTIL, IGISLFVFAFGVSIDSFSVGL, IITILLFGFVSMLLAWIGLLI, and YGEIVGGIILVGFGLYILFPI.

It belongs to the MntP (TC 9.B.29) family.

The protein resides in the cell membrane. Probably functions as a manganese efflux pump. The polypeptide is Putative manganese efflux pump MntP (Bacillus cereus (strain B4264)).